The following is a 232-amino-acid chain: Large ribosomal subunit protein uL1 (232 aa).

The protein belongs to the universal ribosomal protein uL1 family. As to quaternary structure, part of the 50S ribosomal subunit.

In terms of biological role, binds directly to 23S rRNA. The L1 stalk is quite mobile in the ribosome, and is involved in E site tRNA release. Its function is as follows. Protein L1 is also a translational repressor protein, it controls the translation of the L11 operon by binding to its mRNA. In Hahella chejuensis (strain KCTC 2396), this protein is Large ribosomal subunit protein uL1.